A 413-amino-acid chain; its full sequence is Protein PHR1-LIKE 1 (413 aa).

Disordered regions lie at residues 171 to 196 and 208 to 233; these read SEPNWSELLGDSSSHNPNSEIPTPFL and QQQMVSSEDQLSGRNSSSSVATSKQR. Composition is skewed to polar residues over residues 181 to 191 and 208 to 231; these read DSSSHNPNSEI and QQQMVSSEDQLSGRNSSSSVATSK. Residues 228–288 enclose the HTH myb-type domain; the sequence is ATSKQRMRWT…HLQKYRTARY (61 aa). The H-T-H motif DNA-binding region spans 259–284; the sequence is PKAVLKLLNNPGLTIYHVKSHLQKYR. The coiled coil stretch occupies residues 322-342; the sequence is TQALRLQMEVQKRLHEQLEIQ. An LHEQLE motif is present at residues 335–340; it reads LHEQLE. A disordered region spans residues 363 to 413; sequence QQKIQDNKSSSSEASPKQCNGSFAEVEVGLETLTGDQNESASASRKRVRED. Polar residues-rich tracts occupy residues 369 to 383 and 396 to 405; these read NKSSSSEASPKQCNG and TGDQNESASA.

The protein belongs to the MYB-CC family. Homodimers and heterodimers. Interacts with MED25. Does not interact with PHL2 or PHL3. As to expression, expressed in shoots and roots.

The protein resides in the nucleus. Functionally, transcription factor acting as central integrator of phosphate starvation responses. Regulates FER1 expression upon phosphate starvation, linking iron and phosphate homeostasis. The sequence is that of Protein PHR1-LIKE 1 (PHL1) from Arabidopsis thaliana (Mouse-ear cress).